A 313-amino-acid polypeptide reads, in one-letter code: HPr kinase/phosphorylase (313 aa).

Catalysis depends on residues His-136 and Lys-157. Gly-151–Ser-158 lines the ATP pocket. Residue Ser-158 coordinates Mg(2+). The active-site Proton acceptor; for phosphorylation activity. Proton donor; for dephosphorylation activity is the Asp-175. The interval Leu-199–Asn-208 is important for the catalytic mechanism of both phosphorylation and dephosphorylation. Glu-200 lines the Mg(2+) pocket. Arg-241 is a catalytic residue. The tract at residues Pro-262–Arg-267 is important for the catalytic mechanism of dephosphorylation.

It belongs to the HPrK/P family. As to quaternary structure, homohexamer. Mg(2+) serves as cofactor.

The enzyme catalyses [HPr protein]-L-serine + ATP = [HPr protein]-O-phospho-L-serine + ADP + H(+). The catalysed reaction is [HPr protein]-O-phospho-L-serine + phosphate + H(+) = [HPr protein]-L-serine + diphosphate. Functionally, catalyzes the ATP- as well as the pyrophosphate-dependent phosphorylation of a specific serine residue in HPr, a phosphocarrier protein of the phosphoenolpyruvate-dependent sugar phosphotransferase system (PTS). HprK/P also catalyzes the pyrophosphate-producing, inorganic phosphate-dependent dephosphorylation (phosphorolysis) of seryl-phosphorylated HPr (P-Ser-HPr). The two antagonistic activities of HprK/P are regulated by several intracellular metabolites, which change their concentration in response to the absence or presence of rapidly metabolisable carbon sources (glucose, fructose, etc.) in the growth medium. Therefore, by controlling the phosphorylation state of HPr, HPrK/P is a sensor enzyme that plays a major role in the regulation of carbon metabolism and sugar transport: it mediates carbon catabolite repression (CCR), and regulates PTS-catalyzed carbohydrate uptake and inducer exclusion. The sequence is that of HPr kinase/phosphorylase from Staphylococcus saprophyticus subsp. saprophyticus (strain ATCC 15305 / DSM 20229 / NCIMB 8711 / NCTC 7292 / S-41).